We begin with the raw amino-acid sequence, 90 residues long: Large ribosomal subunit protein bL27 (90 aa).

A disordered region spans residues 1 to 22; sequence MAHKKAGGSSRNGRDSESKRLG.

This sequence belongs to the bacterial ribosomal protein bL27 family.

The sequence is that of Large ribosomal subunit protein bL27 from Allorhizobium ampelinum (strain ATCC BAA-846 / DSM 112012 / S4) (Agrobacterium vitis (strain S4)).